The sequence spans 347 residues: Probable dual-specificity RNA methyltransferase RlmN (347 aa).

The active-site Proton acceptor is the Glu90. The 231-residue stretch at 96–326 (YKHGNSICIS…VTVRREMGSD (231 aa)) folds into the Radical SAM core domain. Cysteines 103 and 331 form a disulfide. [4Fe-4S] cluster contacts are provided by Cys110, Cys114, and Cys117. S-adenosyl-L-methionine-binding positions include 157–158 (GE), Ser189, 212–214 (SLH), and Asn288. The active-site S-methylcysteine intermediate is Cys331.

It belongs to the radical SAM superfamily. RlmN family. The cofactor is [4Fe-4S] cluster.

Its subcellular location is the cytoplasm. It carries out the reaction adenosine(2503) in 23S rRNA + 2 reduced [2Fe-2S]-[ferredoxin] + 2 S-adenosyl-L-methionine = 2-methyladenosine(2503) in 23S rRNA + 5'-deoxyadenosine + L-methionine + 2 oxidized [2Fe-2S]-[ferredoxin] + S-adenosyl-L-homocysteine. The catalysed reaction is adenosine(37) in tRNA + 2 reduced [2Fe-2S]-[ferredoxin] + 2 S-adenosyl-L-methionine = 2-methyladenosine(37) in tRNA + 5'-deoxyadenosine + L-methionine + 2 oxidized [2Fe-2S]-[ferredoxin] + S-adenosyl-L-homocysteine. Its function is as follows. Specifically methylates position 2 of adenine 2503 in 23S rRNA and position 2 of adenine 37 in tRNAs. This Clostridium botulinum (strain Eklund 17B / Type B) protein is Probable dual-specificity RNA methyltransferase RlmN.